The following is a 170-amino-acid chain: Acetyl-CoA decarbonylase/synthase complex subunit epsilon 2 (170 aa).

The protein belongs to the CdhB family. In terms of assembly, heterotetramer of two alpha and two epsilon subunits. The ACDS complex is made up of alpha, epsilon, beta, gamma and delta subunits with a probable stoichiometry of (alpha(2)epsilon(2))(4)-beta(8)-(gamma(1)delta(1))(8).

The protein operates within one-carbon metabolism; methanogenesis from acetate. In terms of biological role, part of a complex that catalyzes the reversible cleavage of acetyl-CoA, allowing growth on acetate as sole source of carbon and energy. The alpha-epsilon subcomponent functions as a carbon monoxide dehydrogenase. The precise role of the epsilon subunit is unclear; it may have a stabilizing role within the alpha(2)epsilon(2) component and/or be involved in electron transfer to FAD during a potential FAD-mediated CO oxidation. The chain is Acetyl-CoA decarbonylase/synthase complex subunit epsilon 2 (cdhB2) from Methanosarcina mazei (strain ATCC BAA-159 / DSM 3647 / Goe1 / Go1 / JCM 11833 / OCM 88) (Methanosarcina frisia).